The primary structure comprises 401 residues: Nicotinate phosphoribosyltransferase (401 aa).

His224 carries the post-translational modification Phosphohistidine; by autocatalysis.

It belongs to the NAPRTase family. In terms of processing, transiently phosphorylated on a His residue during the reaction cycle. Phosphorylation strongly increases the affinity for substrates and increases the rate of nicotinate D-ribonucleotide production. Dephosphorylation regenerates the low-affinity form of the enzyme, leading to product release.

The enzyme catalyses nicotinate + 5-phospho-alpha-D-ribose 1-diphosphate + ATP + H2O = nicotinate beta-D-ribonucleotide + ADP + phosphate + diphosphate. It functions in the pathway cofactor biosynthesis; NAD(+) biosynthesis; nicotinate D-ribonucleotide from nicotinate: step 1/1. Its function is as follows. Catalyzes the synthesis of beta-nicotinate D-ribonucleotide from nicotinate and 5-phospho-D-ribose 1-phosphate at the expense of ATP. The protein is Nicotinate phosphoribosyltransferase of Pseudomonas putida (strain ATCC 47054 / DSM 6125 / CFBP 8728 / NCIMB 11950 / KT2440).